We begin with the raw amino-acid sequence, 160 residues long: Cyclic pyranopterin monophosphate synthase (160 aa).

Substrate-binding positions include 74–76 and 112–113; these read LSH and ME. The active site involves D127.

It belongs to the MoaC family. As to quaternary structure, homohexamer; trimer of dimers.

The enzyme catalyses (8S)-3',8-cyclo-7,8-dihydroguanosine 5'-triphosphate = cyclic pyranopterin phosphate + diphosphate. The protein operates within cofactor biosynthesis; molybdopterin biosynthesis. Functionally, catalyzes the conversion of (8S)-3',8-cyclo-7,8-dihydroguanosine 5'-triphosphate to cyclic pyranopterin monophosphate (cPMP). The polypeptide is Cyclic pyranopterin monophosphate synthase (Trichlorobacter lovleyi (strain ATCC BAA-1151 / DSM 17278 / SZ) (Geobacter lovleyi)).